A 377-amino-acid chain; its full sequence is Compound eye opsin BCRH1 (377 aa).

The Extracellular portion of the chain corresponds to 1–53; that stretch reads MANVTGPQMAFYGSGAATFGYPEGMTVADFVPDRVKHMVLDHWYNYPPVNPMW. The N-linked (GlcNAc...) asparagine glycan is linked to asparagine 3. Residues 54–78 traverse the membrane as a helical segment; sequence HYLLGVVYLFLGVISIAGNGLVIYL. Topologically, residues 79 to 90 are cytoplasmic; the sequence is YMKSQALKTPAN. A helical transmembrane segment spans residues 91 to 115; sequence MLIVNLALSDLIMLTTNFPPFCYNC. Over 116–131 the chain is Extracellular; that stretch reads FSGGRWMFSGTYCEIY. Cysteines 128 and 205 form a disulfide. Residues 132 to 151 traverse the membrane as a helical segment; that stretch reads AALGAITGVCSIWTLCMISF. Over 152-170 the chain is Cytoplasmic; that stretch reads DRYNIICNGFNGPKLTQGK. The helical transmembrane segment at 171-194 threads the bilayer; it reads ATFMCGLAWVISVGWSLPPFFGWG. The Extracellular portion of the chain corresponds to 195–218; sequence SYTLEGILDSCSYDYFTRDMNTIT. A helical transmembrane segment spans residues 219-246; it reads YNICIFIFDFFLPASVIVFSYVFIVKAI. The Cytoplasmic segment spans residues 247-281; the sequence is FAHEAAMRAQAKKMNVTNLRSNEAETQRAEIRIAK. The chain crosses the membrane as a helical span at residues 282–305; it reads TALVNVSLWFICWTPYAAITIQGL. The Extracellular portion of the chain corresponds to 306-313; that stretch reads LGNAEGIT. The helical transmembrane segment at 314–338 threads the bilayer; sequence PLLTTLPALLAKSCSCYNPFVYAIS. Position 325 is an N6-(retinylidene)lysine (lysine 325). Topologically, residues 339-377 are cytoplasmic; the sequence is HPKFRLAITQHLPWFCVHEKDPNDVEENQSSNTQTQEKS.

Belongs to the G-protein coupled receptor 1 family. Opsin subfamily. In terms of processing, phosphorylated on some or all of the serine and threonine residues present in the C-terminal region. Expressed in all of the seven retinular cells (R1-R7) forming the main rhabdom in each ommatidium.

The protein localises to the membrane. Its function is as follows. Visual pigments are the light-absorbing molecules that mediate vision. They consist of an apoprotein, opsin, covalently linked to cis-retinal. This opsin produces visual pigments with maximal absorption in the blue-green region of the spectrum. This Hemigrapsus sanguineus (Asian shore crab) protein is Compound eye opsin BCRH1.